The primary structure comprises 438 residues: Serine hydroxymethyltransferase (438 aa).

(6S)-5,6,7,8-tetrahydrofolate is bound by residues leucine 133 and 137–139 (GHL). Lysine 242 is subject to N6-(pyridoxal phosphate)lysine.

Belongs to the SHMT family. In terms of assembly, homodimer. It depends on pyridoxal 5'-phosphate as a cofactor.

Its subcellular location is the cytoplasm. The enzyme catalyses (6R)-5,10-methylene-5,6,7,8-tetrahydrofolate + glycine + H2O = (6S)-5,6,7,8-tetrahydrofolate + L-serine. Its pathway is one-carbon metabolism; tetrahydrofolate interconversion. It participates in amino-acid biosynthesis; glycine biosynthesis; glycine from L-serine: step 1/1. Functionally, catalyzes the reversible interconversion of serine and glycine with tetrahydrofolate (THF) serving as the one-carbon carrier. This reaction serves as the major source of one-carbon groups required for the biosynthesis of purines, thymidylate, methionine, and other important biomolecules. Also exhibits THF-independent aldolase activity toward beta-hydroxyamino acids, producing glycine and aldehydes, via a retro-aldol mechanism. This chain is Serine hydroxymethyltransferase, found in Brucella melitensis biotype 2 (strain ATCC 23457).